The following is an 85-amino-acid chain: Kappa-theraphotoxin-Gr1a (85 aa).

The signal sequence occupies residues 1 to 21 (MKTSVFAAILGLALFAVLCSG). Residues 22–49 (SELQEKDLKETLLSAIMETALEAQPEER) constitute a propeptide that is removed on maturation. 3 disulfide bridges follow: Cys51–Cys65, Cys58–Cys70, and Cys64–Cys77. The tract at residues 53–55 (YLF) is involved in active face.

The protein belongs to the neurotoxin 10 (Hwtx-1) family. 09 (HaTx) subfamily. In terms of tissue distribution, expressed by the venom gland.

The protein localises to the secreted. Inhibits Kv2.1/KCNB1 and Kv4.2/KCND2 voltage-gated potassium channels. Acts as a gating modifier by shifting channel openings to more depolarized voltages and acts via the occupancy of multiple binding sites on the channel. The toxin binding sites are situated on the S3-S4 extracellular linker of the channel. At least two hanatoxin molecules can occupy the Kv2.1/KCNB1 channel, and maybe more (three or four). Can also inhibit calcium channels (Cav2.1/CACNA1A). Needs to partition into the membrane in order to bind to the channel. This chain is Kappa-theraphotoxin-Gr1a, found in Grammostola rosea (Chilean rose tarantula).